The primary structure comprises 121 residues: Small ribosomal subunit protein uS13 (121 aa).

The interval 91-121 is disordered; it reads HRKGLPLRGQRTRTNARTRKGPRKAGVALKK.

The protein belongs to the universal ribosomal protein uS13 family. In terms of assembly, part of the 30S ribosomal subunit. Forms a loose heterodimer with protein S19. Forms two bridges to the 50S subunit in the 70S ribosome.

In terms of biological role, located at the top of the head of the 30S subunit, it contacts several helices of the 16S rRNA. In the 70S ribosome it contacts the 23S rRNA (bridge B1a) and protein L5 of the 50S subunit (bridge B1b), connecting the 2 subunits; these bridges are implicated in subunit movement. Contacts the tRNAs in the A and P-sites. This Cupriavidus pinatubonensis (strain JMP 134 / LMG 1197) (Cupriavidus necator (strain JMP 134)) protein is Small ribosomal subunit protein uS13.